The chain runs to 250 residues: Ribosomal RNA small subunit methyltransferase J (250 aa).

S-adenosyl-L-methionine contacts are provided by residues 101–102 (RD), 117–118 (ER), 153–154 (SS), and Asp-171.

Belongs to the methyltransferase superfamily. RsmJ family.

The protein localises to the cytoplasm. It carries out the reaction guanosine(1516) in 16S rRNA + S-adenosyl-L-methionine = N(2)-methylguanosine(1516) in 16S rRNA + S-adenosyl-L-homocysteine + H(+). In terms of biological role, specifically methylates the guanosine in position 1516 of 16S rRNA. The polypeptide is Ribosomal RNA small subunit methyltransferase J (Escherichia fergusonii (strain ATCC 35469 / DSM 13698 / CCUG 18766 / IAM 14443 / JCM 21226 / LMG 7866 / NBRC 102419 / NCTC 12128 / CDC 0568-73)).